Consider the following 122-residue polypeptide: Large ribosomal subunit protein bL12 (122 aa).

The protein belongs to the bacterial ribosomal protein bL12 family. In terms of assembly, homodimer. Part of the ribosomal stalk of the 50S ribosomal subunit. Forms a multimeric L10(L12)X complex, where L10 forms an elongated spine to which 2 to 4 L12 dimers bind in a sequential fashion. Binds GTP-bound translation factors.

Its function is as follows. Forms part of the ribosomal stalk which helps the ribosome interact with GTP-bound translation factors. Is thus essential for accurate translation. This chain is Large ribosomal subunit protein bL12, found in Myxococcus xanthus (strain DK1622).